The chain runs to 531 residues: Na(+)/H(+) antiporter NhaB (531 aa).

Transmembrane regions (helical) follow at residues 13–33 (FLGK…IINP), 34–54 (LVFF…EFIF), 90–110 (LVAN…IYFM), 121–141 (ILIG…TAAF), 145–165 (FLDA…FYAI), 206–226 (LLMH…VGEP), 242–262 (FIIR…LTCV), 308–328 (VIAV…GLIG), 352–372 (EEAL…AVII), 394–414 (LALF…VFVG), 456–476 (GQAA…QLSY), and 482–502 (MALP…SFLL).

The protein belongs to the NhaB Na(+)/H(+) (TC 2.A.34) antiporter family.

It localises to the cell inner membrane. The enzyme catalyses 2 Na(+)(in) + 3 H(+)(out) = 2 Na(+)(out) + 3 H(+)(in). In terms of biological role, na(+)/H(+) antiporter that extrudes sodium in exchange for external protons. This chain is Na(+)/H(+) antiporter NhaB, found in Aliivibrio salmonicida (strain LFI1238) (Vibrio salmonicida (strain LFI1238)).